The sequence spans 84 residues: Putative defensin-like protein 139 (84 aa).

The first 28 residues, 1–28, serve as a signal peptide directing secretion; sequence MEPSNQIFFYLRRSKLLSGLGEIRMAKG. 4 disulfides stabilise this stretch: C37-C81, C46-C65, C51-C75, and C55-C77.

This sequence belongs to the DEFL family.

Its subcellular location is the secreted. The chain is Putative defensin-like protein 139 (LCR7) from Arabidopsis thaliana (Mouse-ear cress).